A 198-amino-acid polypeptide reads, in one-letter code: (S)-2-hydroxypropylphosphonic acid epoxidase (198 aa).

An HTH cro/C1-type domain is found at 15-70 (LKDRREQVKMDHAALASLLGETPETVAAWENGEGGELTLTQLGRIAHVLGTSIGAL). Residue Lys23 coordinates substrate. Positions 26–45 (HAALASLLGETPETVAAWEN) form a DNA-binding region, H-T-H motif. Substrate contacts are provided by residues Arg97, Tyr105, 135–138 (NSGH), and Glu142. One can recognise a Cupin type-2 domain in the interval 136–196 (SGHAGNEFLF…GTGSAKLIAV (61 aa)). Fe cation contacts are provided by His138, Glu142, and His180.

Belongs to the non-heme iron-dependent dioxygenase family. As to quaternary structure, homotetramer. Requires Fe(2+) as cofactor.

It catalyses the reaction (S)-2-hydroxypropylphosphonate + H2O2 = (1R,2S)-epoxypropylphosphonate + 2 H2O. Its pathway is antibiotic biosynthesis; fosfomycin biosynthesis. Its function is as follows. Non-heme-dependent dioxygenase that catalyzes the oxidative epoxidation of (S)-2-hydroxypropylphosphonate into (1R,2S)-epoxypropylphosphonate, the final step in the biosynthesis of fosfomycin antibiotic. This chain is (S)-2-hydroxypropylphosphonic acid epoxidase (hppE), found in Streptomyces wedmorensis.